The primary structure comprises 61 residues: Small ribosomal subunit protein uS14 (61 aa).

Positions 24, 27, 40, and 43 each coordinate Zn(2+).

This sequence belongs to the universal ribosomal protein uS14 family. Zinc-binding uS14 subfamily. Part of the 30S ribosomal subunit. Contacts proteins S3 and S10. Zn(2+) is required as a cofactor.

Binds 16S rRNA, required for the assembly of 30S particles and may also be responsible for determining the conformation of the 16S rRNA at the A site. The protein is Small ribosomal subunit protein uS14 of Parafrankia sp. (strain EAN1pec).